The following is a 342-amino-acid chain: MAAEDFLTIFLDDDESWNETLNMSGYDYSGNFSLEVSVCEMTTVVPYTWNVGILSLIFLINVLGNGLVTYIFCKHRSRAGAIDILLLGICLNSLCLSISLLAEVLMFLFPNIISTGLCRLEIFFYYLYVYLDIFSVVCVSLVRYLLVAYSTRSWPKKQSLGWVLTSAALLIALVLSGDACRHRSRVVDPVSKQAMCYENAGNMTADWRLHVRTVSVTAGFLLPLALLILFYALTWCVVRRTKLQARRKVRGVIVAVVLLFFVFCFPYHVLNLLDTLLRRRWIRDSCYTRGLINVGLAVTSLLQALYSAVVPLIYSCLGSLFRQRMYGLFQSLRQSFMSGATT.

Residues 1–51 lie on the Extracellular side of the membrane; that stretch reads MAAEDFLTIFLDDDESWNETLNMSGYDYSGNFSLEVSVCEMTTVVPYTWNV. Residues N18, N22, and N31 are each glycosylated (N-linked (GlcNAc...) asparagine; by host). A helical transmembrane segment spans residues 52–72; that stretch reads GILSLIFLINVLGNGLVTYIF. Residues 73 to 92 lie on the Cytoplasmic side of the membrane; that stretch reads CKHRSRAGAIDILLLGICLN. Residues 93-113 form a helical membrane-spanning segment; that stretch reads SLCLSISLLAEVLMFLFPNII. Residues 114–121 lie on the Extracellular side of the membrane; the sequence is STGLCRLE. The chain crosses the membrane as a helical span at residues 122-142; it reads IFFYYLYVYLDIFSVVCVSLV. Residues 143 to 159 lie on the Cytoplasmic side of the membrane; it reads RYLLVAYSTRSWPKKQS. A helical membrane pass occupies residues 160 to 180; the sequence is LGWVLTSAALLIALVLSGDAC. The Extracellular segment spans residues 181–217; sequence RHRSRVVDPVSKQAMCYENAGNMTADWRLHVRTVSVT. The helical transmembrane segment at 218-238 threads the bilayer; that stretch reads AGFLLPLALLILFYALTWCVV. Residues 239-251 are Cytoplasmic-facing; that stretch reads RRTKLQARRKVRG. The helical transmembrane segment at 252 to 272 threads the bilayer; the sequence is VIVAVVLLFFVFCFPYHVLNL. At 273–293 the chain is on the extracellular side; the sequence is LDTLLRRRWIRDSCYTRGLIN. A helical membrane pass occupies residues 294-314; it reads VGLAVTSLLQALYSAVVPLIY. The Cytoplasmic segment spans residues 315–342; that stretch reads SCLGSLFRQRMYGLFQSLRQSFMSGATT.

Belongs to the G-protein coupled receptor 1 family. In terms of assembly, interacts with protein K7; this interaction promotes vGPCR proteasomal degradation. Interacts with host CADM1; this interaction is essential for chronic NF-kappa-B activation.

Its subcellular location is the host cell membrane. In terms of biological role, receptor that signals constitutively via several signaling pathways including PI3K/AKT as well as mitogen- and stress-activated/MAP kinases. Promotes host cell proliferation and survival, modulates cell migration, stimulates angiogenesis, and recruits inflammatory cells, both in expressing cells and in neighboring cells. Maintains chronic activation of NF-kappa-B via interaction with host CADM1. The sequence is that of viral G-protein coupled receptor (ORF74) from Human herpesvirus 8 type P (isolate GK18) (HHV-8).